The sequence spans 396 residues: Argininosuccinate synthase (396 aa).

Position 9 to 17 (9 to 17) interacts with ATP; it reads AYSGGLDTS. Residue tyrosine 85 participates in L-citrulline binding. Residue glycine 115 coordinates ATP. L-aspartate-binding residues include threonine 117, asparagine 121, and aspartate 122. Asparagine 121 is a binding site for L-citrulline. Arginine 125, serine 173, glutamate 258, and tyrosine 270 together coordinate L-citrulline.

It belongs to the argininosuccinate synthase family. Type 1 subfamily. In terms of assembly, homotetramer.

It localises to the cytoplasm. The catalysed reaction is L-citrulline + L-aspartate + ATP = 2-(N(omega)-L-arginino)succinate + AMP + diphosphate + H(+). It functions in the pathway amino-acid biosynthesis; L-arginine biosynthesis; L-arginine from L-ornithine and carbamoyl phosphate: step 2/3. This is Argininosuccinate synthase from Streptococcus agalactiae serotype Ia (strain ATCC 27591 / A909 / CDC SS700).